A 359-amino-acid chain; its full sequence is DNA polymerase IV (359 aa).

A UmuC domain is found at 4 to 185 (IIHIDMDCYF…LSLRKIPGVG (182 aa)). 2 residues coordinate Mg(2+): Asp-8 and Asp-103. Residue Glu-104 is part of the active site.

Belongs to the DNA polymerase type-Y family. As to quaternary structure, monomer. Mg(2+) is required as a cofactor.

It localises to the cytoplasm. It catalyses the reaction DNA(n) + a 2'-deoxyribonucleoside 5'-triphosphate = DNA(n+1) + diphosphate. In terms of biological role, poorly processive, error-prone DNA polymerase involved in untargeted mutagenesis. Copies undamaged DNA at stalled replication forks, which arise in vivo from mismatched or misaligned primer ends. These misaligned primers can be extended by PolIV. Exhibits no 3'-5' exonuclease (proofreading) activity. May be involved in translesional synthesis, in conjunction with the beta clamp from PolIII. The protein is DNA polymerase IV of Shewanella sp. (strain MR-7).